Reading from the N-terminus, the 73-residue chain is Disintegrin mojastin-2 (73 aa).

The Disintegrin domain occupies 1–73 (EAGEECDCGS…ADCPRNGLYG (73 aa)). 6 cysteine pairs are disulfide-bonded: Cys6–Cys21, Cys8–Cys16, Cys15–Cys38, Cys29–Cys35, Cys34–Cys59, and Cys47–Cys66. Positions 51 to 53 (RGD) match the Cell attachment site motif.

It belongs to the venom metalloproteinase (M12B) family. P-II subfamily. P-IIa sub-subfamily. Monomer (disintegrin). Expressed by the venom gland.

Its subcellular location is the secreted. Its function is as follows. Inhibits the three processes involved in platelet function (adhesion, activation and aggregation). It inhibits platelet adhesion to fibronectin with an IC(50) of 58.6 nM. It inhibits ATP release from platelet induced by ADP with an IC(50) of 19.5 nM on platelet-rich plasma, probably by binding to ADP receptors (P2RY1 and P2RY12). Finally, it inhibits ADP-induced platelet aggregation with IC(50) of 44.7 nM on platelet-rich plasma and 19.3 nM on whole blood, probably by binding to alpha-IIb/beta-3 (ITGA2B/ITGB3). Inhibits ADP-induced platelet aggregation (IC(50) = 13.8 nM) probably by binding to alpha-IIb/beta-3 (ITGA2B/ITGB3) located on the platelet surface. This Crotalus scutulatus scutulatus (Mojave rattlesnake) protein is Disintegrin mojastin-2.